A 614-amino-acid chain; its full sequence is Sodium- and chloride-dependent betaine transporter (614 aa).

The segment at 1-33 is disordered; it reads MDRKVAVPEDGPPVVSWLPEEGEKLDQEGEDQV. The Cytoplasmic portion of the chain corresponds to 1–44; sequence MDRKVAVPEDGPPVVSWLPEEGEKLDQEGEDQVKDRGQWTNKME. Residues 21-33 show a composition bias toward basic and acidic residues; it reads EGEKLDQEGEDQV. 3 consecutive transmembrane segments (helical) span residues 45–65, 73–92, and 117–137; these read FVLS…FPYL, AFFI…VFFL, and GIGL…IIIL. The Extracellular segment spans residues 138 to 210; that stretch reads AWALFYLFSS…SGIHDLGALR (73 aa). Residues cysteine 157 and cysteine 166 are joined by a disulfide bond. Asparagine 171 and asparagine 183 each carry an N-linked (GlcNAc...) asparagine glycan. 9 helical membrane passes run 211–229, 238–255, 291–308, 320–341, 374–393, 423–441, 458–478, 499–518, and 538–556; these read WELA…FCIW, VVYF…ILLI, IFFS…LGSY, IALC…FSIL, MPLS…FLGL, LLIL…FLVT, GICL…VYGA, ISWL…FSLS, and IGWF…FVII. Residues 557–614 lie on the Cytoplasmic side of the membrane; the sequence is TLLKTRGSFKKRLRQLTTPDPSLPQPKQHLYLDGGTSQDCGPSPTKEGLIVGEKETHL. Residues 591–614 form a disordered region; the sequence is GTSQDCGPSPTKEGLIVGEKETHL.

The protein belongs to the sodium:neurotransmitter symporter (SNF) (TC 2.A.22) family. SLC6A12 subfamily. Interacts with LIN7C. In terms of tissue distribution, kidney.

It is found in the basolateral cell membrane. It localises to the cell membrane. The catalysed reaction is 4-aminobutanoate(out) + chloride(out) + 3 Na(+)(out) = 4-aminobutanoate(in) + chloride(in) + 3 Na(+)(in). It catalyses the reaction glycine betaine(out) + 2 chloride(out) + 3 Na(+)(out) = glycine betaine(in) + 2 chloride(in) + 3 Na(+)(in). Its function is as follows. Transporter that mediates cellular uptake of betaine and GABA in a sodium- and chloride-dependent process. May have a role in regulation of GABAergic transmission in the brain through the reuptake of GABA into presynaptic terminals, as well as in osmotic regulation. Probably also involved in renal and hepatic osmotic regulation. This is Sodium- and chloride-dependent betaine transporter (SLC6A12) from Canis lupus familiaris (Dog).